A 1295-amino-acid polypeptide reads, in one-letter code: Protein FORGETTER 1 (1295 aa).

3 stretches are compositionally biased toward pro residues: residues 1–14 (MTQS…PLPA), 75–89 (PQQP…PPPI), and 162–177 (PPTP…PPPE). Disordered regions lie at residues 1-20 (MTQS…HSAA), 68-107 (RPQF…PAHG), 153-204 (LTAS…MDYR), and 626-688 (PEQP…NDSD). The span at 178–193 (EVNEEAIEVEREEDEG) shows a compositional bias: acidic residues. The Nuclear localization signal motif lies at 643-650 (RKRHSASP). A compositionally biased stretch (acidic residues) spans 669–688 (DNESDLESEADSADDSNDSD). Residues 691–741 (FQICQICSGEDERKKLLHCSECDKLFHPDCVVPPVIDLPSEAWICFSCKEK) form a PHD-type zinc finger.

This sequence belongs to the SBNO family. Interacts with SWI/SNF and ISWI chromatin remodelers such as BRM, CHR11 and CHR17. Binds to histone H3.

It is found in the nucleus. In terms of biological role, required for normal embryo development. Necessary to acquire heat stress (HS) memory, by modulating nucleosome occupancy and regulating heat-induced gene expression. Associates globally with the nucleosome-poor regions flanking the transcription units of expressed genes. Binds to the promoter regions, primarily to the proximal promoter just upstream of the transcriptional start sites (TSS) and somewhat more weakly to the region downstream of the transcription termination site (TTS), of actively expressed genes (e.g. HSA32, HSP18.2 and HSP22.0) in a heat-dependent fashion. The polypeptide is Protein FORGETTER 1 (Arabidopsis thaliana (Mouse-ear cress)).